The chain runs to 133 residues: Large ribosomal subunit protein bL12 (133 aa).

It belongs to the bacterial ribosomal protein bL12 family. In terms of assembly, homodimer. Part of the ribosomal stalk of the 50S ribosomal subunit. Forms a multimeric L10(L12)X complex, where L10 forms an elongated spine to which 2 to 4 L12 dimers bind in a sequential fashion. Binds GTP-bound translation factors.

Functionally, forms part of the ribosomal stalk which helps the ribosome interact with GTP-bound translation factors. Is thus essential for accurate translation. This Trichodesmium erythraeum (strain IMS101) protein is Large ribosomal subunit protein bL12.